A 562-amino-acid polypeptide reads, in one-letter code: Beta-hexosaminidase (562 aa).

Residues 1–22 form the signal peptide; that stretch reads MVLDKMIIFHLLLWLCNVVVHA. 7 N-linked (GlcNAc...) asparagine glycosylation sites follow: Asn38, Asn52, Asn111, Asn337, Asn382, Asn396, and Asn463.

The protein belongs to the glycosyl hydrolase 20 family.

The enzyme catalyses Hydrolysis of terminal non-reducing N-acetyl-D-hexosamine residues in N-acetyl-beta-D-hexosaminides.. Functionally, has a broad substrate specificity. The chain is Beta-hexosaminidase (HEX1) from Candida albicans (Yeast).